We begin with the raw amino-acid sequence, 2019 residues long: Sodium channel protein type 5 subunit alpha (2019 aa).

Over 1-129 (MANFLLPRGT…VRRAAVKILV (129 aa)) the chain is Cytoplasmic. Positions 27 to 66 (RMAEKQARGSATSQESREGLPEEEAPRPQLDLQASKKLPD) are disordered. Phosphoserine is present on S36. T38 carries the post-translational modification Phosphothreonine. The segment covering 41 to 52 (ESREGLPEEEAP) has biased composition (basic and acidic residues). The stretch at 113 to 420 (VLSPFHPVRR…VVAMAYEEQN (308 aa)) is one I repeat. A helical transmembrane segment spans residues 130-149 (HSLFSMLIMCTILTNCVFMA). Over 150-157 (QHDPPPWT) the chain is Extracellular. Residues 158–179 (KYVEYTFTAIYTFESLVKILAR) traverse the membrane as a helical segment. Residues 180–188 (GFCLHAFTF) are Cytoplasmic-facing. The chain crosses the membrane as a helical span at residues 189–209 (LRDPWNWLDFSVIVMAYTTEF). The Extracellular segment spans residues 210–216 (VDLGNVS). N214 is a glycosylation site (N-linked (GlcNAc...) asparagine). The helical transmembrane segment at 217–236 (ALRTFRVLRALKTISVISGL) threads the bilayer. At 237–249 (KTIVGALIQSVKK) the chain is on the cytoplasmic side. The helical transmembrane segment at 250 to 272 (LADVMVLTVFCLSVFALIGLQLF) threads the bilayer. Residues 273–357 (MGNLRHKCVR…PDHGYTSFDS (85 aa)) lie on the Extracellular side of the membrane. C280 and C335 are oxidised to a cystine. 5 N-linked (GlcNAc...) asparagine glycosylation sites follow: N283, N288, N291, N318, and N328. Positions 358-378 (FAWAFLALFRLMTQDCWERLY) form an intramembrane region, pore-forming. The Extracellular segment spans residues 379-386 (QQTLRSAG). Residues 387 to 413 (KIYMIFFMLVIFLGSFYLVNLILAVVA) traverse the membrane as a helical segment. The Cytoplasmic segment spans residues 414 to 719 (MAYEEQNQAT…VKFVVMDPFA (306 aa)). Phosphoserine is present on residues S457, S460, S483, and S484. Disordered stretches follow at residues 461–575 (LEMS…TQGQ) and 610–647 (EATS…TPQA). The residue at position 486 (T486) is a Phosphothreonine. Residues 491-503 (DDRLPKSDSEDGP) show a composition bias toward basic and acidic residues. A phosphoserine mark is found at S497 and S510. The segment covering 507–528 (NQLSLTHGLSRTSMRPRSSRGS) has biased composition (polar residues). A Dimethylated arginine; alternate modification is found at R526. An Omega-N-methylarginine; alternate modification is found at R526. S539 and S571 each carry phosphoserine. A phosphoserine mark is found at S664 and S667. One copy of the II repeat lies at 699-971 (CCPLWMSIKQ…QLALARIQRG (273 aa)). A helical transmembrane segment spans residues 720 to 737 (DLTITMCIVLNTLFMALE). The Extracellular segment spans residues 738 to 746 (HYNMTAEFE). N740 carries an N-linked (GlcNAc...) asparagine glycan. Residues 747–769 (EMLQVGNLVFTGIFTAEMTFKII) traverse the membrane as a helical segment. Over 770 to 775 (ALDPYY) the chain is Cytoplasmic. A helical transmembrane segment spans residues 776 to 796 (YFQQGWNIFDSIIVILSLMEL). The Extracellular portion of the chain corresponds to 797-806 (GLSRMGNLSV). An N-linked (GlcNAc...) asparagine glycan is attached at N803. The chain crosses the membrane as a helical span at residues 807–821 (LRSFRLLRVFKLAKS). The Cytoplasmic portion of the chain corresponds to 822 to 838 (WPTLNTLIKIIGNSVGA). A helical transmembrane segment spans residues 839-860 (LGNLTLVLAIIVFIFAVVGMQL). Residues 861-886 (FGKNYSELRHRISDSGLLPRWHMMDF) lie on the Extracellular side of the membrane. N864 is a glycosylation site (N-linked (GlcNAc...) asparagine). An intramembrane region (pore-forming) is located at residues 887–905 (FHAFLIIFRILCGEWIETM). Residues 906–914 (WDCMEVSGQ) are Extracellular-facing. C908 and C917 are joined by a disulfide. The helical transmembrane segment at 915-943 (SLCLLVFLLVMVIGNLVVLNLFLALLLSS) threads the bilayer. Over 944 to 1205 (FSADNLTAPD…LRKTCYRIVE (262 aa)) the chain is Cytoplasmic. Positions 1000-1144 (HSQLPSCIAA…EDSYSEGSTA (145 aa)) are disordered. The segment covering 1017–1036 (EVEKAPPARKETRFEEDKRP) has biased composition (basic and acidic residues). The span at 1056 to 1075 (SDTDDQEEDEENSLGTEEEE) shows a compositional bias: acidic residues. Low complexity predominate over residues 1098-1115 (SQVSETTSSEAEASTSQA). The III repeat unit spans residues 1189–1503 (PGKVWWRLRK…KKYYNAMKKL (315 aa)). Residues 1206–1227 (HSWFETFIIFMILLSSGALAFE) traverse the membrane as a helical segment. Residues 1228 to 1238 (DIYLEERKTIK) lie on the Extracellular side of the membrane. Residues 1239–1261 (VLLEYADKMFTYVFVLEMLLKWV) form a helical membrane-spanning segment. The Cytoplasmic portion of the chain corresponds to 1262–1270 (AYGFKKYFT). The helical transmembrane segment at 1271 to 1293 (NAWCWLDFLIVDVSLVSLVANTL) threads the bilayer. Over 1294-1299 (GFAEMG) the chain is Extracellular. A helical transmembrane segment spans residues 1300 to 1319 (PIKSLRTLRALRPLRALSRF). The Cytoplasmic portion of the chain corresponds to 1320–1332 (EGMRVVVNALVGA). The helical transmembrane segment at 1333 to 1357 (IPSIMNVLLVCLIFWLIFSIMGVNL) threads the bilayer. At 1358 to 1402 (FAGKFGRCINQTEGDLPLNYTIVNNKSECESFNVTGELYWTKVKV) the chain is on the extracellular side. N-linked (GlcNAc...) asparagine glycosylation is found at N1367, N1376, N1382, and N1390. Positions 1403–1424 (NFDNVGAGYLALLQVATFKGWM) form an intramembrane region, pore-forming. Topologically, residues 1425–1447 (DIMYAAVDSRGYEEQPQWEDNLY) are extracellular. The helical transmembrane segment at 1448–1472 (MYIYFVVFIIFGSFFTLNLFIGVII) threads the bilayer. Over 1473–1530 (DNFNQQKKKLGGQDIFMTEEQKKYYNAMKKLGSKKPQKPIPRPLNKYQGFIFDIVTKQ) the chain is Cytoplasmic. S1505 is modified (phosphoserine; by PKC). The stretch at 1512-1809 (IPRPLNKYQG…WEKFDPEATQ (298 aa)) is one IV repeat. Residues 1531-1549 (AFDVTIMFLICLNMVTMMV) form a helical membrane-spanning segment. The Extracellular portion of the chain corresponds to 1550–1560 (ETDDQSPEKVN). Residues 1561-1582 (ILAKINLLFVAIFTGECIVKMA) form a helical membrane-spanning segment. Residues 1583–1591 (ALRHYYFTN) lie on the Cytoplasmic side of the membrane. The chain crosses the membrane as a helical span at residues 1592–1614 (SWNIFDFVVVILSIVGTVLSDII). Topologically, residues 1615–1621 (QKYFFSP) are extracellular. A helical transmembrane segment spans residues 1622-1642 (TLFRVIRLARIGRILRLIRGA). Residues 1643–1652 (KGIRTLLFAL) lie on the Cytoplasmic side of the membrane. A helical membrane pass occupies residues 1653-1681 (MMSLPALFNIGLLLFLVMFIYSIFGMANF). Topologically, residues 1682–1699 (AYVKWEAGIDDMFNFQTF) are extracellular. Residues 1700–1716 (ANSMLCLFQITTSAGWD) constitute an intramembrane region (pore-forming). Topologically, residues 1717-1747 (GLLSPILNTGPPYCDPNLPNSNGSRGNCGSP) are extracellular. The chain crosses the membrane as a helical span at residues 1748–1773 (AVGILFFTTYIIISFLIVVNMYIAII). At 1774–2019 (LENFSVATEE…SPDRDRESIV (246 aa)) the chain is on the cytoplasmic side. An interaction with FGF13 region spans residues 1841 to 1903 (DLPMVSGDRI…ITTTLRRKHE (63 aa)). The IQ domain occupies 1903–1932 (EEVSATVIQRAFRRHLLQRSVKHASFLFRQ). The span at 1963–1982 (SGPLSSSSISSTSFPPSYDS) shows a compositional bias: low complexity. Positions 1963-2019 (SGPLSSSSISSTSFPPSYDSVTRATSDNLPVRASDYSRSEDLADFPPSPDRDRESIV) are disordered. The interval 1977 to 1980 (PPSY) is interaction with NEDD4, NEDD4L and WWP2.

Belongs to the sodium channel (TC 1.A.1.10) family. Nav1.5/SCN5A subfamily. As to quaternary structure, cannot form the same regulatory interactions with beta subunits as other Navs do. Interacts with the PDZ domain of the syntrophin SNTA1, SNTB1 and SNTB2. Interacts with NEDD4, NEDD4L, WWP2 and GPD1L. Interacts with CALM. Interacts with FGF13; the interaction is direct and may regulate SNC5A density at membranes and function. Interacts with FGF12 and FGF14. Interacts with ANK3. Interacts with PKP2 (via N-terminus). Interacts with TMEM233. Interacts with XIRP2; the interaction is required for normal action potential configuration in the heart. In terms of processing, phosphorylation at Ser-1505 by PKC in a highly conserved cytoplasmic loop slows inactivation of the sodium channel and reduces peak sodium currents. Regulated through phosphorylation by CaMK2D. Post-translationally, ubiquitinated by NEDD4L; which promotes its endocytosis. Does not seem to be ubiquitinated by NEDD4 or WWP2. Lacks the cysteine which covalently binds the conotoxin GVIIJ. This cysteine (position 868) is speculated in other sodium channel subunits alpha to be implied in covalent binding with the sodium channel subunit beta-2 or beta-4. In terms of processing, N-glycosylated at Asn-318, probably hinders potential interaction with regulatory subunits. Expressed in the myocardium (at protein level).

It localises to the cell membrane. The protein localises to the cytoplasm. It is found in the perinuclear region. The protein resides in the sarcolemma. Its subcellular location is the T-tubule. It localises to the cell junction. It carries out the reaction Na(+)(in) = Na(+)(out). Channel inactivation is regulated by intracellular calcium levels. It is a tetrodotoxin-resistant voltage-gated Na(+) channel (Nav). Its function is as follows. Pore-forming subunit of Nav1.5, a voltage-gated sodium (Nav) channel that directly mediates the depolarizing phase of action potentials in excitable membranes. Navs, also called VGSCs (voltage-gated sodium channels) or VDSCs (voltage-dependent sodium channels), operate by switching between closed and open conformations depending on the voltage difference across the membrane. In the open conformation they allow Na(+) ions to selectively pass through the pore, along their electrochemical gradient. The influx of Na(+) ions provokes membrane depolarization, initiating the propagation of electrical signals throughout cells and tissues. Nav1.5 is the predominant sodium channel expressed in myocardial cells and it is responsible for the initial upstroke of the action potential in cardiac myocytes, thereby initiating the heartbeat. Required for normal electrical conduction including formation of the infranodal ventricular conduction system and normal action potential configuration, as a result of its interaction with XIRP2. This is Sodium channel protein type 5 subunit alpha from Mus musculus (Mouse).